We begin with the raw amino-acid sequence, 327 residues long: L-serine dehydratase/L-threonine deaminase (327 aa).

K41 is modified (N6-(pyridoxal phosphate)lysine).

This sequence belongs to the serine/threonine dehydratase family. As to quaternary structure, homodimer. It depends on pyridoxal 5'-phosphate as a cofactor.

The protein resides in the cytoplasm. It carries out the reaction L-serine = pyruvate + NH4(+). The catalysed reaction is L-threonine = 2-oxobutanoate + NH4(+). The protein operates within carbohydrate biosynthesis; gluconeogenesis. Its function is as follows. Catalyzes the pyridoxal-phosphate-dependent dehydrative deamination of L-threonine and L-serine to ammonia and alpha-ketobutyrate and pyruvate, respectively. The polypeptide is L-serine dehydratase/L-threonine deaminase (SDS) (Bos taurus (Bovine)).